Consider the following 643-residue polypeptide: Phosphomethylpyrimidine synthase (643 aa).

Residues asparagine 248, methionine 277, tyrosine 306, histidine 342, 362 to 364 (SRG), 403 to 406 (DGLR), and glutamate 442 contribute to the substrate site. Histidine 446 contributes to the Zn(2+) binding site. Substrate is bound at residue tyrosine 469. Histidine 510 contributes to the Zn(2+) binding site. Positions 590, 593, and 598 each coordinate [4Fe-4S] cluster.

It belongs to the ThiC family. As to quaternary structure, homodimer. It depends on [4Fe-4S] cluster as a cofactor.

It catalyses the reaction 5-amino-1-(5-phospho-beta-D-ribosyl)imidazole + S-adenosyl-L-methionine = 4-amino-2-methyl-5-(phosphooxymethyl)pyrimidine + CO + 5'-deoxyadenosine + formate + L-methionine + 3 H(+). The protein operates within cofactor biosynthesis; thiamine diphosphate biosynthesis. Catalyzes the synthesis of the hydroxymethylpyrimidine phosphate (HMP-P) moiety of thiamine from aminoimidazole ribotide (AIR) in a radical S-adenosyl-L-methionine (SAM)-dependent reaction. The polypeptide is Phosphomethylpyrimidine synthase (Paraburkholderia xenovorans (strain LB400)).